The following is a 264-amino-acid chain: tRNA pseudouridine synthase A (264 aa).

The active-site Nucleophile is the aspartate 51. Tyrosine 109 contacts substrate.

Belongs to the tRNA pseudouridine synthase TruA family. Homodimer.

The enzyme catalyses uridine(38/39/40) in tRNA = pseudouridine(38/39/40) in tRNA. In terms of biological role, formation of pseudouridine at positions 38, 39 and 40 in the anticodon stem and loop of transfer RNAs. The protein is tRNA pseudouridine synthase A of Polaromonas naphthalenivorans (strain CJ2).